Here is a 416-residue protein sequence, read N- to C-terminus: PTS system N-acetylglucosamine-specific EIIC component (416 aa).

A PTS EIIC type-1 domain is found at 16–406 (SGLFQGLQKV…FNLKTPGREP (391 aa)). The next 10 membrane-spanning stretches (helical) occupy residues 68-88 (AGGALTGSLPILFCIGVAIGF), 96-116 (TALAAVVGFLVYSKVLEAFPV), 130-150 (TYNDPGVLGGIIMGLLAAVLW), 170-190 (LVPIIMAFVGIVVGVFFGLVW), 196-216 (GISNFGEWMTGLGSGGAALFG), 266-286 (IFQAGFFPIMMFGLPAAALAM), 298-318 (VLGMMISLAATSFVTGVTEPI), 323-343 (MFIAPVLYVLHAVLTAISMAI), 344-364 (TWGLGVHAGFNFSAGFIDYAL), and 375-395 (IIPIGLVFAAIYYVTFRFAIV).

It localises to the cell membrane. Its function is as follows. The phosphoenolpyruvate-dependent sugar phosphotransferase system (sugar PTS), a major carbohydrate active transport system, catalyzes the phosphorylation of incoming sugar substrates concomitantly with their translocation across the cell membrane. This system is involved in N-acetylglucosamine (GlcNAc) transport. High-affinity permease, which exhibits a narrow specificity for GlcNAc. Essential for C-signaling between vegetative growth and development. This chain is PTS system N-acetylglucosamine-specific EIIC component, found in Streptomyces coelicolor (strain ATCC BAA-471 / A3(2) / M145).